Here is a 635-residue protein sequence, read N- to C-terminus: DNA mismatch repair protein MutL (635 aa).

The interval 352 to 380 is disordered; the sequence is KAALQRGWVPPGAGRPGEGGGRAAPPPWR.

It belongs to the DNA mismatch repair MutL/HexB family.

In terms of biological role, this protein is involved in the repair of mismatches in DNA. It is required for dam-dependent methyl-directed DNA mismatch repair. May act as a 'molecular matchmaker', a protein that promotes the formation of a stable complex between two or more DNA-binding proteins in an ATP-dependent manner without itself being part of a final effector complex. This chain is DNA mismatch repair protein MutL, found in Symbiobacterium thermophilum (strain DSM 24528 / JCM 14929 / IAM 14863 / T).